Reading from the N-terminus, the 328-residue chain is Fe(3+) ions import ATP-binding protein FbpC 1 (328 aa).

The region spanning 7 to 237 (LVLKNITKAF…PNSLFLANFM (231 aa)) is the ABC transporter domain. Residue 39–46 (GPSGCGKT) participates in ATP binding.

The protein belongs to the ABC transporter superfamily. Fe(3+) ion importer (TC 3.A.1.10) family. The complex is composed of two ATP-binding proteins (FbpC), two transmembrane proteins (FbpB) and a solute-binding protein (FbpA).

Its subcellular location is the cell inner membrane. The catalysed reaction is Fe(3+)(out) + ATP + H2O = Fe(3+)(in) + ADP + phosphate + H(+). Functionally, part of the ABC transporter complex FbpABC involved in Fe(3+) ions import. Responsible for energy coupling to the transport system. In Haemophilus influenzae (strain ATCC 51907 / DSM 11121 / KW20 / Rd), this protein is Fe(3+) ions import ATP-binding protein FbpC 1.